The sequence spans 154 residues: uncharacterized protein (154 aa).

Histidine 47, histidine 127, and histidine 131 together coordinate a divalent metal cation. Position 150 is a phosphotyrosine (tyrosine 150).

Belongs to the DinB family. Homodimer.

This is an uncharacterized protein from Bacillus subtilis (strain 168).